We begin with the raw amino-acid sequence, 769 residues long: Phosphoribosylformylglycinamidine synthase subunit PurL (769 aa).

Over residues 1–13 the composition is skewed to polar residues; it reads MTGTPSAPTTSPD. The interval 1-30 is disordered; the sequence is MTGTPSAPTTSPDDQADGPGEGTVDRQPYR. His65 is an active-site residue. Residues Tyr68 and Lys109 each contribute to the ATP site. Glu111 is a Mg(2+) binding site. Substrate contacts are provided by residues 112–115 and Arg134; that span reads SHNH. The active-site Proton acceptor is His113. Asp135 contacts Mg(2+). Position 260 (Gln260) interacts with substrate. Residue Asp288 participates in Mg(2+) binding. Substrate is bound at residue 337 to 339; it reads ESQ. ATP is bound by residues Asn524 and Gly561. Asn562 is a binding site for Mg(2+). A substrate-binding site is contributed by Ser564.

Belongs to the FGAMS family. Monomer. Part of the FGAM synthase complex composed of 1 PurL, 1 PurQ and 2 PurS subunits.

It localises to the cytoplasm. The catalysed reaction is N(2)-formyl-N(1)-(5-phospho-beta-D-ribosyl)glycinamide + L-glutamine + ATP + H2O = 2-formamido-N(1)-(5-O-phospho-beta-D-ribosyl)acetamidine + L-glutamate + ADP + phosphate + H(+). The protein operates within purine metabolism; IMP biosynthesis via de novo pathway; 5-amino-1-(5-phospho-D-ribosyl)imidazole from N(2)-formyl-N(1)-(5-phospho-D-ribosyl)glycinamide: step 1/2. Part of the phosphoribosylformylglycinamidine synthase complex involved in the purines biosynthetic pathway. Catalyzes the ATP-dependent conversion of formylglycinamide ribonucleotide (FGAR) and glutamine to yield formylglycinamidine ribonucleotide (FGAM) and glutamate. The FGAM synthase complex is composed of three subunits. PurQ produces an ammonia molecule by converting glutamine to glutamate. PurL transfers the ammonia molecule to FGAR to form FGAM in an ATP-dependent manner. PurS interacts with PurQ and PurL and is thought to assist in the transfer of the ammonia molecule from PurQ to PurL. The chain is Phosphoribosylformylglycinamidine synthase subunit PurL from Parafrankia sp. (strain EAN1pec).